A 1401-amino-acid chain; its full sequence is DNA-directed RNA polymerase subunit beta'' (1401 aa).

Positions 224, 295, 302, and 305 each coordinate Zn(2+).

This sequence belongs to the RNA polymerase beta' chain family. RpoC2 subfamily. As to quaternary structure, in plastids the minimal PEP RNA polymerase catalytic core is composed of four subunits: alpha, beta, beta', and beta''. When a (nuclear-encoded) sigma factor is associated with the core the holoenzyme is formed, which can initiate transcription. The cofactor is Zn(2+).

It localises to the plastid. It is found in the chloroplast. It carries out the reaction RNA(n) + a ribonucleoside 5'-triphosphate = RNA(n+1) + diphosphate. DNA-dependent RNA polymerase catalyzes the transcription of DNA into RNA using the four ribonucleoside triphosphates as substrates. The chain is DNA-directed RNA polymerase subunit beta'' from Ipomoea purpurea (Common morning glory).